Here is a 144-residue protein sequence, read N- to C-terminus: MAYKHILIAVDLSPESKVLVEKAVSMARPYNAKISLIHVDVNYSDLYTGLIDVNLGDMQKRISKETHHALTELSTNAGYPITETLSGSGDLGQVLVDAIKKYDMDLVVCGHHQDFWSKLMSSARQLINTVHVDMLIVPLRDEEE.

Belongs to the universal stress protein A family. Homodimer.

The protein localises to the cytoplasm. In terms of biological role, required for resistance to DNA-damaging agents. In Salmonella typhi, this protein is Universal stress protein A (uspA).